A 505-amino-acid polypeptide reads, in one-letter code: RNA-splicing ligase RtcB homolog (505 aa).

Mn(2+) is bound by residues aspartate 119, cysteine 122, histidine 227, histidine 259, and histidine 353. 226–230 (NHYAE) lines the GMP pocket. Residues 353–354 (HN), 402–405 (GGTM), serine 409, 428–431 (HGAG), and lysine 504 each bind GMP. The active-site GMP-histidine intermediate is histidine 428.

This sequence belongs to the RtcB family. Catalytic component of the tRNA-splicing ligase complex. The cofactor is Mn(2+).

Its subcellular location is the nucleus. The protein resides in the cytoplasm. It catalyses the reaction a 3'-end 3'-phospho-ribonucleotide-RNA + a 5'-end dephospho-ribonucleoside-RNA + GTP = a ribonucleotidyl-ribonucleotide-RNA + GMP + diphosphate. The enzyme catalyses a 3'-end 2',3'-cyclophospho-ribonucleotide-RNA + a 5'-end dephospho-ribonucleoside-RNA + GTP + H2O = a ribonucleotidyl-ribonucleotide-RNA + GMP + diphosphate + H(+). Its function is as follows. Catalytic subunit of the tRNA-splicing ligase complex that acts by directly joining spliced tRNA halves to mature-sized tRNAs by incorporating the precursor-derived splice junction phosphate into the mature tRNA as a canonical 3',5'-phosphodiester. May act as an RNA ligase with broad substrate specificity, and may function toward other RNAs. In Xenopus tropicalis (Western clawed frog), this protein is RNA-splicing ligase RtcB homolog.